The primary structure comprises 413 residues: Serine hydroxymethyltransferase (413 aa).

Residues leucine 115 and 119 to 121 (GHL) contribute to the (6S)-5,6,7,8-tetrahydrofolate site. Lysine 224 carries the N6-(pyridoxal phosphate)lysine modification.

It belongs to the SHMT family. As to quaternary structure, homodimer. It depends on pyridoxal 5'-phosphate as a cofactor.

Its subcellular location is the cytoplasm. It carries out the reaction (6R)-5,10-methylene-5,6,7,8-tetrahydrofolate + glycine + H2O = (6S)-5,6,7,8-tetrahydrofolate + L-serine. It functions in the pathway one-carbon metabolism; tetrahydrofolate interconversion. It participates in amino-acid biosynthesis; glycine biosynthesis; glycine from L-serine: step 1/1. Its function is as follows. Catalyzes the reversible interconversion of serine and glycine with tetrahydrofolate (THF) serving as the one-carbon carrier. This reaction serves as the major source of one-carbon groups required for the biosynthesis of purines, thymidylate, methionine, and other important biomolecules. Also exhibits THF-independent aldolase activity toward beta-hydroxyamino acids, producing glycine and aldehydes, via a retro-aldol mechanism. This chain is Serine hydroxymethyltransferase, found in Mycoplasma capricolum subsp. capricolum (strain California kid / ATCC 27343 / NCTC 10154).